The sequence spans 454 residues: MREIVHVQVGQCGNQVGAKFWEVVSEEHGIDSAGTYKGDTDLQLERINVYYNEVAGSKYVPRAVLVDLEPGVLDSIRASSIGSMFRPDNFTHAQSGAGNNWAKGHYTEGAELVESVVDVVRKEAENCDCLQGFQICHSLGGGTGSGLGTLLISKIREEFPDRMMCTFSVMPSPKVSDTVVEPYNATLSIHQLVENADEVMCIDNEALYDICFRTLKLTTPTYGDLNHLVSGVMSGITACLRFPGQLNSDLRKLAVNLIPFPRLHFFLIGYAPLTARSAMGFRALTVPELTQQIFDSRNMMAASDPRHGRYLTASATFRGKMSTKEVDEQMHAVQTKNSSFFVEWIPNNIKSSVCDIPPKGMKMSATFIGNNTCIQELFKRIGLQFSAMFRRKAFLHWYTGEGMDEMEFTEAESNMNDLVSEYQQYQEASVDDEAMEDDAEAEGGAGQNEAVEEF.

Positions 11, 69, 138, 142, 143, 144, 204, and 226 each coordinate GTP. Residue glutamate 69 coordinates Mg(2+). A disordered region spans residues 426–454 (QEASVDDEAMEDDAEAEGGAGQNEAVEEF). The segment covering 429 to 441 (SVDDEAMEDDAEA) has biased composition (acidic residues).

The protein belongs to the tubulin family. In terms of assembly, dimer of alpha and beta chains. A typical microtubule is a hollow water-filled tube with an outer diameter of 25 nm and an inner diameter of 15 nM. Alpha-beta heterodimers associate head-to-tail to form protofilaments running lengthwise along the microtubule wall with the beta-tubulin subunit facing the microtubule plus end conferring a structural polarity. Microtubules usually have 13 protofilaments but different protofilament numbers can be found in some organisms and specialized cells. The cofactor is Mg(2+).

Its subcellular location is the cytoplasm. The protein localises to the cytoskeleton. The protein resides in the spindle. It localises to the nucleus. In terms of biological role, tubulin is the major constituent of microtubules, a cylinder consisting of laterally associated linear protofilaments composed of alpha- and beta-tubulin heterodimers. Microtubules grow by the addition of GTP-tubulin dimers to the microtubule end, where a stabilizing cap forms. Below the cap, tubulin dimers are in GDP-bound state, owing to GTPase activity of alpha-tubulin. Its function is as follows. This is the major beta tubulin of mitotic spindle. This chain is Tubulin beta-2 chain (BETC), found in Physarum polycephalum (Slime mold).